A 718-amino-acid polypeptide reads, in one-letter code: Sodium/myo-inositol cotransporter (718 aa).

Residues 1 to 9 (MRAVLETAD) lie on the Extracellular side of the membrane. A helical transmembrane segment spans residues 10–29 (IAIVALYFILVMCIGFFAMW). At 30–38 (KSNRSTVSG) the chain is on the cytoplasmic side. A helical membrane pass occupies residues 39-57 (YFLAGRSMTWVAIGASLFV). Residues 58–86 (SNIGSEHFIGLAGSGAASGFAVGAWEFNA) are Extracellular-facing. Residues 87-110 (LLLLQLLGWVFIPIYIRSGVYTMP) traverse the membrane as a helical segment. At 111-123 (EYLSKRFGGHRIQ) the chain is on the cytoplasmic side. Residues 124–144 (VYFAALSLILYIFTKLSVDLY) traverse the membrane as a helical segment. The Extracellular segment spans residues 145–157 (SGALFIQESMGWN). Residues 158–183 (LYVSVILLIGMTALLTVTGGLVAVIY) form a helical membrane-spanning segment. Residues 184 to 186 (TDT) lie on the Cytoplasmic side of the membrane. Residues 187-205 (LQALLMIVGALTLMVISMM) form a helical membrane-spanning segment. Residues 206-303 (EIGGFEEVKR…HAKGSTLMAG (98 aa)) lie on the Extracellular side of the membrane. The N-linked (GlcNAc...) asparagine glycan is linked to N232. A helical membrane pass occupies residues 304-324 (FLKLLPMFIIVVPGMISRILF). At 325–353 (ADDIACINPEHCMQVCGSRAGCSNIAYPR) the chain is on the cytoplasmic side. The chain crosses the membrane as a helical span at residues 354-376 (LVMKLVPVGLRGLMMAVMIAALM). The Extracellular segment spans residues 377 to 406 (SDLDSIFNSASTIFTLDVYKLIRKSASSRE). Residues 407–430 (LMIVGRIFVAFMVVISIAWVPIIV) traverse the membrane as a helical segment. The Cytoplasmic portion of the chain corresponds to 431–443 (EMQGGQMYLYIQE). The chain crosses the membrane as a helical span at residues 444–462 (VADYLTPPVAALFLLAIFW). Over 463 to 510 (KRCNEQGAFYGGMAGFILVVVRLTLAFAYRAPECDQPDNRPVFIKDIH) the chain is Extracellular. The chain crosses the membrane as a helical span at residues 511–532 (YMYVATALFWITGLITVIVSLL). Residues 533–695 (TPPPTKEQIR…QMLEEPPQVK (163 aa)) are Cytoplasmic-facing. A phosphoserine mark is found at S594 and S632. A helical transmembrane segment spans residues 696 to 716 (VILNIGLFGVCSLGIFMFVYF). Residues 717–718 (SL) are Extracellular-facing.

It belongs to the sodium:solute symporter (SSF) (TC 2.A.21) family. Interacts with KCNQ2 (via the pore module). Interacts with KCNQ1; this interaction is direct. Forms coregulatory complexes with ion channels KCNQ2-KCNQ3 and KCNQ1-KCNE2.

The protein resides in the apical cell membrane. The protein localises to the basolateral cell membrane. Its function is as follows. Electrogenic Na(+)-coupled sugar symporter that actively transports myo-inositol and its stereoisomer scyllo-inositol across the plasma membrane, with a Na(+) to sugar coupling ratio of 2:1. Maintains myo-inositol concentration gradient that defines cell volume and fluid balance during osmotic stress, in particular in the fetoplacental unit and central nervous system. Forms coregulatory complexes with voltage-gated K(+) ion channels, allosterically altering ion selectivity, voltage dependence and gating kinetics of the channel. In turn, K(+) efflux through the channel forms a local electrical gradient that modulates electrogenic Na(+)-coupled myo-inositol influx through the transporter. Associates with KCNQ1-KCNE2 channel in the apical membrane of choroid plexus epithelium and regulates the myo-inositol gradient between blood and cerebrospinal fluid with an impact on neuron excitability. Associates with KCNQ2-KCNQ3 channel altering ion selectivity, increasing Na(+) and Cs(+) permeation relative to K(+) permeation. Provides myo-inositol precursor for biosynthesis of phosphoinositides such as PI(4,5)P2, thus indirectly affecting the activity of phosphoinositide-dependent ion channels and Ca(2+) signaling upon osmotic stress. This is Sodium/myo-inositol cotransporter (SLC5A3) from Bos taurus (Bovine).